Reading from the N-terminus, the 475-residue chain is Subtilisin-like protease PopC (475 aa).

Disordered regions lie at residues 1–27 (MKSY…EQGE) and 57–106 (TLPG…QTGA). Positions 165–475 (NRGMSSLAER…KTGKGLAVFR (311 aa)) constitute a Peptidase S8 domain. Active-site charge relay system residues include Asp201, His243, and Ser423.

It belongs to the peptidase S8 family. In terms of assembly, interacts with PopD in non-starving cells.

The protein localises to the cytoplasm. It localises to the periplasm. Its subcellular location is the secreted. In non-starving cells, secretion and protease activity are inhibited by formation of a cytoplasmic complex with PopD. In response to starvation, PopD is degraded in a RelA- and FtsH(D)-dependent manner, thereby releasing pre-formed PopC for secretion. Secreted and active during starvation, and rapidly degraded upon secretion. Secretion is significantly and reversibly reduced by carbonyl cyanide m-chlorophenyl hydrazine (CCCP), which dissipates or reduces the proton motive force (PMF), and by nigericin, which affects the pH gradient. In terms of biological role, required for fruiting body formation, a multicellular developmental program that is induced in response to starvation. Acts as a subtilisin-like protease that directly cleaves the CsgA precursor protein (p25) on the cell surface to generate the intercellular C-signal protein (p17) in starving cells. Preferentially acts in cis, i.e. PopC secreted by a cell only cleaves p25 on that cell. May also be important for processing of other protein(s) that are important for development. The sequence is that of Subtilisin-like protease PopC from Myxococcus xanthus (strain DK1622).